Reading from the N-terminus, the 206-residue chain is Large ribosomal subunit protein uL4 (206 aa).

The disordered stretch occupies residues 43-78; sequence ARSGNRKQKDREEVKHTTKKPWRQKGTGRARAGMSS. Basic and acidic residues predominate over residues 49 to 58; it reads KQKDREEVKH. A compositionally biased stretch (basic residues) spans 59–70; that stretch reads TTKKPWRQKGTG.

It belongs to the universal ribosomal protein uL4 family. In terms of assembly, part of the 50S ribosomal subunit.

Its function is as follows. One of the primary rRNA binding proteins, this protein initially binds near the 5'-end of the 23S rRNA. It is important during the early stages of 50S assembly. It makes multiple contacts with different domains of the 23S rRNA in the assembled 50S subunit and ribosome. In terms of biological role, forms part of the polypeptide exit tunnel. The chain is Large ribosomal subunit protein uL4 from Ralstonia nicotianae (strain ATCC BAA-1114 / GMI1000) (Ralstonia solanacearum).